The sequence spans 201 residues: Small ribosomal subunit protein uS4 (201 aa).

The disordered stretch occupies residues 1-46; that stretch reads MARYTGPRSRISRRFGEPVMGDSKALQKKNYAPGMHGRNKKRKQSE. The 60-residue stretch at 92 to 151 folds into the S4 RNA-binding domain; sequence ARLDNTVYRLGIASSRRAARQLVIHKHIVVNGDVVNIPSYQLKPGDQLGVREKSKSIEAI.

It belongs to the universal ribosomal protein uS4 family. In terms of assembly, part of the 30S ribosomal subunit. Contacts protein S5. The interaction surface between S4 and S5 is involved in control of translational fidelity.

In terms of biological role, one of the primary rRNA binding proteins, it binds directly to 16S rRNA where it nucleates assembly of the body of the 30S subunit. Functionally, with S5 and S12 plays an important role in translational accuracy. This is Small ribosomal subunit protein uS4 from Cytophaga hutchinsonii (strain ATCC 33406 / DSM 1761 / CIP 103989 / NBRC 15051 / NCIMB 9469 / D465).